A 319-amino-acid polypeptide reads, in one-letter code: Lipoyl synthase (319 aa).

The interval M1–S28 is disordered. Over residues R16–S28 the composition is skewed to basic and acidic residues. 7 residues coordinate [4Fe-4S] cluster: C61, C66, C72, C87, C91, C94, and S300. Positions W73 to L289 constitute a Radical SAM core domain.

Belongs to the radical SAM superfamily. Lipoyl synthase family. It depends on [4Fe-4S] cluster as a cofactor.

The protein localises to the cytoplasm. It catalyses the reaction [[Fe-S] cluster scaffold protein carrying a second [4Fe-4S](2+) cluster] + N(6)-octanoyl-L-lysyl-[protein] + 2 oxidized [2Fe-2S]-[ferredoxin] + 2 S-adenosyl-L-methionine + 4 H(+) = [[Fe-S] cluster scaffold protein] + N(6)-[(R)-dihydrolipoyl]-L-lysyl-[protein] + 4 Fe(3+) + 2 hydrogen sulfide + 2 5'-deoxyadenosine + 2 L-methionine + 2 reduced [2Fe-2S]-[ferredoxin]. It functions in the pathway protein modification; protein lipoylation via endogenous pathway; protein N(6)-(lipoyl)lysine from octanoyl-[acyl-carrier-protein]: step 2/2. In terms of biological role, catalyzes the radical-mediated insertion of two sulfur atoms into the C-6 and C-8 positions of the octanoyl moiety bound to the lipoyl domains of lipoate-dependent enzymes, thereby converting the octanoylated domains into lipoylated derivatives. The chain is Lipoyl synthase from Rhodopseudomonas palustris (strain HaA2).